A 1927-amino-acid polypeptide reads, in one-letter code: Lactase/phlorizin hydrolase (1927 aa).

An N-terminal signal peptide occupies residues 1-19; that stretch reads MELSWHVVFIALLSFSCWG. Positions 20 to 868 are cleaved as a propeptide — XBetaGly; the sequence is SDWESDRNFI…NTVNLPSKVR (849 aa). The Extracellular portion of the chain corresponds to 20–1882; it reads SDWESDRNFI…LMLGTTEAQT (1863 aa). N-linked (GlcNAc...) asparagine glycosylation occurs at N42. A glycosyl hydrolase-1 1; Region I region spans residues 44–286; the sequence is SGLLGDQSSN…FIFNLKLPDC (243 aa). A glycosyl hydrolase-1 2; Region II region spans residues 362 to 855; that stretch reads IWEAFANQSR…GFLTKGAKRL (494 aa). N-linked (GlcNAc...) asparagine glycosylation is found at N368, N418, N512, N821, N934, N946, and N989. The interval 902-1366 is glycosyl hydrolase-1 3; Region III. Phlorizin hydrolase/glycosylceramidase activity; it reads TFRDDFLWGV…EVITNNGMPL (465 aa). The Proton donor; for phlorizin hydrolase/Glycosylceramidase activity role is filled by E1065. N1174 carries an N-linked (GlcNAc...) asparagine glycan. A disordered region spans residues 1220–1244; the sequence is RLNPPSYEDDQEMAEEEDPSWPSTA. Residues 1226-1238 are compositionally biased toward acidic residues; the sequence is YEDDQEMAEEEDP. The active-site Nucleophile; for phlorizin hydrolase/Glycosylceramidase activity is the E1273. N-linked (GlcNAc...) asparagine glycans are attached at residues N1340 and N1508. The tract at residues 1373–1846 is glycosyl hydrolase-1 4; Region IV. Lactase activity; that stretch reads LYGRFPEGFI…CNGFPDPATG (474 aa). The active-site Proton donor; for lactase activity is the E1538. The required for homodimerization and transport to the plasma membrane stretch occupies residues 1647 to 1927; the sequence is RDRSLAAGLN…QQELSPVSSF (281 aa). N-linked (GlcNAc...) asparagine glycans are attached at residues N1656 and N1672. E1749 acts as the Nucleophile; for lactase activity in catalysis. 2 N-linked (GlcNAc...) asparagine glycosylation sites follow: N1761 and N1814. The chain crosses the membrane as a helical span at residues 1883 to 1901; the sequence is ALYVLFSLVLLGVCGLAFL. Residues 1902–1927 lie on the Cytoplasmic side of the membrane; the sequence is SYKYCKRSKQGKTQRSQQELSPVSSF.

Belongs to the glycosyl hydrolase 1 family. In terms of assembly, homodimer. N-glycosylated. As to expression, specifically expressed in small intestine.

It localises to the apical cell membrane. The catalysed reaction is lactose + H2O = beta-D-galactose + D-glucose. It carries out the reaction phlorizin + H2O = phloretin + beta-D-glucose. It catalyses the reaction D-cellobiose + H2O = beta-D-glucose + D-glucose. The enzyme catalyses quercetin 4'-O-beta-D-glucoside + H2O = quercetin + beta-D-glucose. The catalysed reaction is quercetin 3-O-beta-D-glucoside + H2O = quercetin + beta-D-glucose. It carries out the reaction kaempferol 3-O-beta-D-glucoside + H2O = kaempferol + beta-D-glucose. It catalyses the reaction luteolin 7-O-beta-D-glucoside + H2O = luteolin + beta-D-glucose. The enzyme catalyses luteolin 4'-O-beta-D-glucoside + H2O = luteolin + beta-D-glucose. The catalysed reaction is (2S)-naringenin 7-O-beta-D-glucoside + H2O = (2S)-naringenin + beta-D-glucose. It carries out the reaction eriodictyol-7-O-beta-D-glucoside + H2O = (S)-eriodictyol + beta-D-glucose. It catalyses the reaction apigenin 7-O-beta-D-glucoside + H2O = apigenin + beta-D-glucose. The enzyme catalyses daidzein 7-O-beta-D-glucoside + H2O = daidzein + beta-D-glucose + H(+). The catalysed reaction is genistein 7-O-beta-D-glucoside + H2O = genistein + beta-D-glucose. It carries out the reaction a beta-D-galactosyl-N-acylsphingosine + H2O = a ceramide + beta-D-galactose.. It catalyses the reaction beta-D-glucosyl-(1&lt;-&gt;1')-N-hexadecanoylsphing-4-enine + H2O = N-hexadecanoylsphing-4-enine + beta-D-glucose. The enzyme catalyses beta-D-galactosyl-(1&lt;-&gt;1')-N-hexadecanoylsphing-4-enine + H2O = beta-D-galactose + N-hexadecanoylsphing-4-enine. The catalysed reaction is beta-D-galactosyl-(1&lt;-&gt;1')-N-hexadecanoylsphinganine + H2O = N-hexadecanoylsphinganine + beta-D-galactose. It carries out the reaction beta-D-glucosyl-(1&lt;-&gt;1')-N-hexadecanoylsphinganine + H2O = N-hexadecanoylsphinganine + beta-D-glucose. Functionally, broad specificity glycosidase of the intestinal brush border membrane that hydrolyzes lactose, the main sugar in mammalian milk, to produce D-glucose and D-galactose. The mature protein is composed of two domains that catalyze the hydrolysis of beta-glucopyranosides and beta-galactopyranosides, with a preference for hydrophilic aglycones (in lactose and cellobiose) for one domain and hydrophobic aglycones (in phlorizin and glycosylceramides) for the other. This Homo sapiens (Human) protein is Lactase/phlorizin hydrolase.